The primary structure comprises 138 residues: MLWFQGNSMQLARSSFGLFLRNCSASKTTLPVLTLFTKDPCPLCDEAKEVLKPYENRQPYKDQKLPGTRRRRSPSSPSHPHMASQSGKRYNLTLNQVLSFDYDMGLDAPKTISSDCGAFYCLRMFKSPDMTCCFYPKQ.

Cysteine 41 and cysteine 44 form a disulfide bridge. The segment covering 55-64 (ENRQPYKDQK) has biased composition (basic and acidic residues). Residues 55–88 (ENRQPYKDQKLPGTRRRRSPSSPSHPHMASQSGK) form a disordered region.

It belongs to the glutaredoxin family. YDR286C subfamily.

This chain is Glutaredoxin-like protein C5orf63 (C5orf63), found in Homo sapiens (Human).